A 166-amino-acid chain; its full sequence is Lipoprotein signal peptidase (166 aa).

Helical transmembrane passes span 10-30, 46-66, 71-91, and 100-120; these read GGALAPWLGISLIVILFDQLT, LTPFFNLTLIYNRGAAFGFLA, WQRWAFTALGIGATLVICYLL, and FSLSLALILGGALGNVIDRLI. Active-site residues include D126 and D144. A helical membrane pass occupies residues 135–155; it reads WHWPAFNLADSAITVGAVLLI.

It belongs to the peptidase A8 family.

Its subcellular location is the cell inner membrane. The catalysed reaction is Release of signal peptides from bacterial membrane prolipoproteins. Hydrolyzes -Xaa-Yaa-Zaa-|-(S,diacylglyceryl)Cys-, in which Xaa is hydrophobic (preferably Leu), and Yaa (Ala or Ser) and Zaa (Gly or Ala) have small, neutral side chains.. The protein operates within protein modification; lipoprotein biosynthesis (signal peptide cleavage). Functionally, this protein specifically catalyzes the removal of signal peptides from prolipoproteins. This is Lipoprotein signal peptidase from Burkholderia thailandensis (strain ATCC 700388 / DSM 13276 / CCUG 48851 / CIP 106301 / E264).